A 468-amino-acid chain; its full sequence is Probable acid phosphatase DIA3 (468 aa).

Residues 1 to 20 (MVKPVIFAICLGVLLSKALS) form the signal peptide. Catalysis depends on H76, which acts as the Nucleophile. N-linked (GlcNAc...) asparagine glycans are attached at residues N98, N163, N193, N202, N238, N251, and N316. D339 serves as the catalytic Proton donor. Residues N357, N391, N457, and N462 are each glycosylated (N-linked (GlcNAc...) asparagine).

The protein belongs to the histidine acid phosphatase family.

The enzyme catalyses a phosphate monoester + H2O = an alcohol + phosphate. This is Probable acid phosphatase DIA3 (DIA3) from Saccharomyces cerevisiae (strain ATCC 204508 / S288c) (Baker's yeast).